A 125-amino-acid chain; its full sequence is MISIVLVSHSQKITEGLQEMIVEMVGDTVHIISSGGTGDGRLGTNALMIADNIATCTNSEHIYIFCDIGSAILSAETALELLDTELLEKTTIIDAPLVEGAFTAAVQSLVNPSKEAILQELTNVH.

A PTS EIIA type-4 domain is found at 1 to 125; sequence MISIVLVSHS…AILQELTNVH (125 aa). The active-site Tele-phosphohistidine intermediate is the histidine 9.

The protein belongs to the PEP-utilizing enzyme family. In terms of assembly, homodimer. The dihydroxyacetone kinase complex is composed of a homodimer of DhaM, a homodimer of DhaK and the subunit DhaL.

The protein localises to the cytoplasm. The enzyme catalyses dihydroxyacetone + phosphoenolpyruvate = dihydroxyacetone phosphate + pyruvate. Functionally, component of the dihydroxyacetone kinase complex, which is responsible for the phosphoenolpyruvate (PEP)-dependent phosphorylation of dihydroxyacetone. DhaM serves as the phosphoryl donor. Is phosphorylated by phosphoenolpyruvate in an EI- and HPr-dependent reaction, and a phosphorelay system on histidine residues finally leads to phosphoryl transfer to DhaL and dihydroxyacetone. This is PEP-dependent dihydroxyacetone kinase 2, phosphoryl donor subunit DhaM from Listeria innocua serovar 6a (strain ATCC BAA-680 / CLIP 11262).